A 639-amino-acid chain; its full sequence is tRNA uridine 5-carboxymethylaminomethyl modification enzyme MnmG (639 aa).

FAD contacts are provided by residues 13–18, Val-125, and Ser-180; that span reads GGGHAG. 273 to 287 is a binding site for NAD(+); it reads GPRYCPSIEDKVVRF. Gln-370 provides a ligand contact to FAD. Residues 620–639 are disordered; the sequence is KRQGGNGPQSPRPDDGRARA.

This sequence belongs to the MnmG family. In terms of assembly, homodimer. Heterotetramer of two MnmE and two MnmG subunits. FAD is required as a cofactor.

The protein resides in the cytoplasm. Its function is as follows. NAD-binding protein involved in the addition of a carboxymethylaminomethyl (cmnm) group at the wobble position (U34) of certain tRNAs, forming tRNA-cmnm(5)s(2)U34. The chain is tRNA uridine 5-carboxymethylaminomethyl modification enzyme MnmG from Thioalkalivibrio sulfidiphilus (strain HL-EbGR7).